The sequence spans 604 residues: M-phase inducer phosphatase cdc-25.1 (604 aa).

Disordered stretches follow at residues 33–67 (PKTLFEEDGSSRDSGVSMTSCSDKSDASPEEDVDF) and 127–188 (EKRV…PFGD). The span at 44–54 (RDSGVSMTSCS) shows a compositional bias: polar residues. A compositionally biased stretch (basic and acidic residues) spans 127 to 138 (EKRVMSERPTDN). In terms of domain architecture, Rhodanese spans 305 to 413 (FDKKYIIVDC…LWSTAECRQI (109 aa)). Disordered stretches follow at residues 443–464 (ASLKPNGETSHREEKKKRCTRS) and 562–588 (DFPDRPSESSSTTPAGEHLPLGEGGHQ).

It belongs to the MPI phosphatase family.

It carries out the reaction O-phospho-L-tyrosyl-[protein] + H2O = L-tyrosyl-[protein] + phosphate. This Caenorhabditis elegans protein is M-phase inducer phosphatase cdc-25.1 (cdc-25.1).